We begin with the raw amino-acid sequence, 172 residues long: Austinoid biosynthesis clusters protein J (172 aa).

The protein belongs to the trt14 isomerase family. In terms of assembly, homodimer.

Its pathway is secondary metabolite biosynthesis; terpenoid biosynthesis. Its function is as follows. Part of the gene cluster B that mediates the biosynthesis of the fungal meroterpenoid acetoxydehydroaustin. The first step of the pathway is the synthesis of 3,5-dimethylorsellinic acid by the polyketide synthase ausA. 3,5-dimethylorsellinic acid is then prenylated by the polyprenyl transferase ausN. Further epoxidation by the FAD-dependent monooxygenase ausM and cyclization by the probable terpene cyclase ausL lead to the formation of protoaustinoid A. Protoaustinoid A is then oxidized to spiro-lactone preaustinoid A3 by the combined action of the FAD-binding monooxygenases ausB and ausC, and the dioxygenase ausE. Acid-catalyzed keto-rearrangement and ring contraction of the tetraketide portion of preaustinoid A3 by ausJ lead to the formation of preaustinoid A4. The aldo-keto reductase ausK, with the help of ausH, is involved in the next step by transforming preaustinoid A4 into isoaustinone which is in turn hydroxylated by the P450 monooxygenase ausI to form austinolide. The cytochrome P450 monooxygenase ausG then modifies austinolide to austinol. Austinol is further acetylated to austin by the O-acetyltransferase ausP, which spontaneously changes to dehydroaustin. The cytochrome P450 monooxygenase then converts dehydroaustin is into 7-dehydrodehydroaustin. The hydroxylation catalyzed by ausR permits the second O-acetyltransferase ausQ to add an additional acetyl group to the molecule, leading to the formation of acetoxydehydroaustin. Due to genetic rearrangements of the clusters and the subsequent loss of some enzymes, the end product of the Penicillium brasilianum austinoid biosynthesis clusters is acetoxydehydroaustin. The protein is Austinoid biosynthesis clusters protein J of Penicillium brasilianum.